Consider the following 311-residue polypeptide: Heme A synthase (311 aa).

The Cytoplasmic segment spans residues 1–6 (MQRFIK). A helical membrane pass occupies residues 7–27 (WLAVITSLDLLIVLLGGALVT). Over 28 to 62 (KTGSGQGCGKSWPLCNGEFVPSNLSMETIIELSHR) the chain is Extracellular. Cysteine 35 and cysteine 42 are disulfide-bonded. The active site involves glutamate 58. Histidine 61 is a binding site for heme o. Residues 63-83 (LTSGSAGILVTLLCILSWKYY) form a helical membrane-spanning segment. At 84 to 91 (KHVRETKT) the chain is on the cytoplasmic side. A helical transmembrane segment spans residues 92 to 112 (LAILSFVFLVAQALMGAAAVV). The Extracellular portion of the chain corresponds to 113 to 121 (WGQMPAVLA). Residues 122–142 (IHFGISLISFASVILLTCLIF) form a helical membrane-spanning segment. Histidine 123 contacts heme o. Over 143 to 159 (EIDQKFDARSLIMDKKM) the chain is Cytoplasmic. A helical transmembrane segment spans residues 160-180 (KFHIYGVTIYSYIVVYTGALV). At 181 to 211 (RHERASLACPDFPLCSKNRPMPTQLHEWVQM) the chain is on the extracellular side. Cysteine 189 and cysteine 195 are joined by a disulfide. Residues 212–232 (GHRVAAMLIFAWILYAMILAI) form a helical membrane-spanning segment. Histidine 213 contributes to the heme b binding site. The Cytoplasmic portion of the chain corresponds to 233-243 (RHYKQQPVVYW). Residues 244–264 (GWIISFILVTLQAIVGILVVF) form a helical membrane-spanning segment. Residues 265–271 (TNASLSM) are Extracellular-facing. The chain crosses the membrane as a helical span at residues 272-292 (ALLHSLFISCLFAVLCYLVML). Histidine 275 is a heme b binding site. Residues 293-311 (GTRSKVNAKEAASISKQTK) lie on the Cytoplasmic side of the membrane.

The protein belongs to the COX15/CtaA family. Type 1 subfamily. As to quaternary structure, interacts with CtaB. Requires heme b as cofactor.

The protein resides in the cell membrane. It catalyses the reaction Fe(II)-heme o + 2 A + H2O = Fe(II)-heme a + 2 AH2. It participates in porphyrin-containing compound metabolism; heme A biosynthesis; heme A from heme O: step 1/1. Catalyzes the conversion of heme O to heme A by two successive hydroxylations of the methyl group at C8. The first hydroxylation forms heme I, the second hydroxylation results in an unstable dihydroxymethyl group, which spontaneously dehydrates, resulting in the formyl group of heme A. The protein is Heme A synthase of Bacillus cereus (strain AH187).